We begin with the raw amino-acid sequence, 365 residues long: MNTLGRFLRLTTFGESHGDVIGGVLDGMPSGIKIDYALLENEMKRRQGGRNVFITPRKEDDKVEITSGVFEGFSTGTPIGFLIHNQRARSKDYDNIKNLFRPSHADFTYFHKYGIRDFRGGGRSSARESAIRVAAGAFAKMLLREIGIVCESGIIEIGGIKAKNYDFNHALKSEIFALDEEQEEVQKTAIQNAIKNHDSIGGVALIRARSAKTNQKLPIGLGQGLYAKLDAKIAEAMIGLNGVKAVEIGKGVESSLLKGSEYNDLMDQKGFLSNRSGGVLGGMSNGEEIIIRAHFKPTPSIFQPQQTIDINNQECECLLKGRHDPCIAIRGSVVCESLLSLVLADMVLLNLTSKIEYLKTIYNEN.

NADP(+) is bound at residue Arg-46. Residues 123–125, 241–242, Gly-281, 296–300, and Arg-322 each bind FMN; these read RSS, NG, and KPTPS.

This sequence belongs to the chorismate synthase family. In terms of assembly, homotetramer. FMNH2 serves as cofactor.

The catalysed reaction is 5-O-(1-carboxyvinyl)-3-phosphoshikimate = chorismate + phosphate. It participates in metabolic intermediate biosynthesis; chorismate biosynthesis; chorismate from D-erythrose 4-phosphate and phosphoenolpyruvate: step 7/7. Its function is as follows. Catalyzes the anti-1,4-elimination of the C-3 phosphate and the C-6 proR hydrogen from 5-enolpyruvylshikimate-3-phosphate (EPSP) to yield chorismate, which is the branch point compound that serves as the starting substrate for the three terminal pathways of aromatic amino acid biosynthesis. This reaction introduces a second double bond into the aromatic ring system. The chain is Chorismate synthase from Helicobacter pylori (strain Shi470).